The following is a 418-amino-acid chain: 3-isopropylmalate dehydratase large subunit 1 (418 aa).

3 residues coordinate [4Fe-4S] cluster: C298, C358, and C361.

This sequence belongs to the aconitase/IPM isomerase family. LeuC type 2 subfamily. Heterodimer of LeuC and LeuD. Requires [4Fe-4S] cluster as cofactor.

The catalysed reaction is (2R,3S)-3-isopropylmalate = (2S)-2-isopropylmalate. It functions in the pathway amino-acid biosynthesis; L-leucine biosynthesis; L-leucine from 3-methyl-2-oxobutanoate: step 2/4. Functionally, catalyzes the isomerization between 2-isopropylmalate and 3-isopropylmalate, via the formation of 2-isopropylmaleate. This Thermotoga maritima (strain ATCC 43589 / DSM 3109 / JCM 10099 / NBRC 100826 / MSB8) protein is 3-isopropylmalate dehydratase large subunit 1.